A 389-amino-acid chain; its full sequence is Na(+)/H(+) antiporter NhaA 1 (389 aa).

11 helical membrane-spanning segments follow: residues 12–32, 62–82, 97–117, 128–148, 157–177, 184–204, 220–240, 260–280, 282–302, 331–351, and 365–385; these read VLNE…ALLV, FLLW…GLEL, IVLP…LFAL, GWAI…MMCG, IFLL…IAIF, IVAF…NLLG, ISVL…AFFI, FWIA…VNLS, IDIG…LFVG, LYGV…IDGL, and LAIL…LKFF.

Belongs to the NhaA Na(+)/H(+) (TC 2.A.33) antiporter family.

The protein localises to the cell inner membrane. It catalyses the reaction Na(+)(in) + 2 H(+)(out) = Na(+)(out) + 2 H(+)(in). Na(+)/H(+) antiporter that extrudes sodium in exchange for external protons. This is Na(+)/H(+) antiporter NhaA 1 from Campylobacter jejuni (strain RM1221).